The primary structure comprises 20 residues: Phylloseptin-O1 (20 aa).

Gly-20 carries the glycine amide modification.

As to expression, expressed by the skin glands.

It localises to the secreted. Its function is as follows. Has antiprotozoal activity against T.cruzi. The polypeptide is Phylloseptin-O1 (psn4) (Pithecopus oreades (Orange-legged leaf frog)).